Here is a 321-residue protein sequence, read N- to C-terminus: L-carnitine dehydrogenase (321 aa).

7 to 12 (GTGVIG) lines the NAD(+) pocket.

The protein belongs to the 3-hydroxyacyl-CoA dehydrogenase family. L-carnitine dehydrogenase subfamily. In terms of assembly, homodimer.

It is found in the cytoplasm. It catalyses the reaction carnitine + NAD(+) = 3-dehydrocarnitine + NADH + H(+). It functions in the pathway amine and polyamine metabolism; carnitine metabolism. Functionally, catalyzes the NAD(+)-dependent oxidation of L-carnitine to 3-dehydrocarnitine. The sequence is that of L-carnitine dehydrogenase from Staphylococcus epidermidis (strain ATCC 12228 / FDA PCI 1200).